The following is a 1876-amino-acid chain: Mediator of RNA polymerase II transcription subunit 12 (1876 aa).

The span at 1 to 10 shows a compositional bias: low complexity; it reads MLRSGAASAS. Disordered regions lie at residues 1 to 75, 291 to 314, 715 to 737, 1373 to 1405, and 1801 to 1876; these read MLRS…DMSQ, TATA…AAPS, PSAS…PSSV, STDA…PAQA, and LPCR…SKRD. Residues 1373 to 1387 are compositionally biased toward basic and acidic residues; sequence STDADKTPRRMDNSH. Residues 1394–1405 show a composition bias toward low complexity; sequence GPDDGADAPAQA. Residues 1867-1876 are compositionally biased toward basic residues; it reads SRKRRLSKRD.

This sequence belongs to the Mediator complex subunit 12 family. Component of the SRB8-11 complex, which itself associates with the Mediator complex.

The protein resides in the nucleus. In terms of biological role, component of the SRB8-11 complex. The SRB8-11 complex is a regulatory module of the Mediator complex which is itself involved in regulation of basal and activated RNA polymerase II-dependent transcription. The SRB8-11 complex may be involved in the transcriptional repression of a subset of genes regulated by Mediator. It may inhibit the association of the Mediator complex with RNA polymerase II to form the holoenzyme complex. The sequence is that of Mediator of RNA polymerase II transcription subunit 12 (SRB8) from Mycosarcoma maydis (Corn smut fungus).